A 399-amino-acid polypeptide reads, in one-letter code: uncharacterized protein (399 aa).

11 helical membrane-spanning segments follow: residues 19–39 (IFSI…PLFV), 46–66 (VNLL…LLMY), 91–111 (FYTI…PILG), 123–143 (QFEQ…IIAS), 146–166 (IYAK…IFIA), 183–203 (LLSA…ISYI), 225–247 (VAIL…MPIW), 283–303 (VLLL…LLGF), 307–327 (FGLD…FAYL), 335–355 (LFSI…YLGY), and 369–389 (IEYT…VYLL).

It localises to the host membrane. In terms of biological role, putative amino acid transporter. This is an uncharacterized protein from Saccharolobus islandicus (Sulfolobus islandicus).